We begin with the raw amino-acid sequence, 313 residues long: Ribosomal RNA small subunit methyltransferase H (313 aa).

S-adenosyl-L-methionine is bound by residues 31 to 33 (GGH), Asp-51, Phe-77, Asp-95, and Gln-102.

This sequence belongs to the methyltransferase superfamily. RsmH family.

The protein resides in the cytoplasm. It catalyses the reaction cytidine(1402) in 16S rRNA + S-adenosyl-L-methionine = N(4)-methylcytidine(1402) in 16S rRNA + S-adenosyl-L-homocysteine + H(+). Specifically methylates the N4 position of cytidine in position 1402 (C1402) of 16S rRNA. This chain is Ribosomal RNA small subunit methyltransferase H, found in Xylella fastidiosa (strain 9a5c).